We begin with the raw amino-acid sequence, 135 residues long: Histone H3 type 1 (135 aa).

The interval 1–40 is disordered; the sequence is MARTKQTARKSTGGKAPRKQLATKAARKTPATGGVKKPHR. K5 is subject to N6-methyllysine. At K10 the chain carries N6-acetyllysine; alternate. Residue K10 is modified to N6-methyllysine; alternate. Position 11 is a phosphoserine (S11). At T12 the chain carries Phosphothreonine. N6-acetyllysine is present on residues K15, K19, and K24. N6-acetyllysine; alternate is present on K28. An N6-methyllysine; alternate modification is found at K28. 2 positions are modified to N6-methyllysine: K36 and K37.

It belongs to the histone H3 family. As to quaternary structure, the nucleosome is a histone octamer containing two molecules each of H2A, H2B, H3 and H4 assembled in one H3-H4 heterotetramer and two H2A-H2B heterodimers. The octamer wraps approximately 147 bp of DNA. In terms of processing, acetylation is generally linked to gene activation. Acetylated to form H3K9ac (11%), H3K14ac (17%), H3K18ac (11%), H3K23ac (16%) and H3K27ac (7%). H3K4, H3K35 and H3K36 are not acetylated. H3K4me prevents acetylation. 32% of the histone H3 are acetylated with, on average, 2.4 acetyl-Lys. They are all continuously deacatylated and re-acetylated with a half-life of approximately 2 minutes. Monomethylated to form H3K4me1 (81%), H3K9me1 (16%), H3K27me1 (25%), H3K35me1 (25%) and H3K36me1 (5%). No methylation at H3K14, H3K18 and H3K23. Methylated by a protein complex that includes Mut11. Set1 methylates specifically H3K4. H3K4me1 is associated with silenced euchromatin. Set3 forms H3K9me1, while H3K9me2 is undetected. H3K9me1 is specifically associated with silent, multi-copy transgenes. Post-translationally, no phosphorylation detected.

It localises to the nucleus. It is found in the chromosome. Its function is as follows. Core component of nucleosome. Nucleosomes wrap and compact DNA into chromatin, limiting DNA accessibility to the cellular machineries which require DNA as a template. Histones thereby play a central role in transcription regulation, DNA repair, DNA replication and chromosomal stability. DNA accessibility is regulated via a complex set of post-translational modifications of histones, also called histone code, and nucleosome remodeling. The polypeptide is Histone H3 type 1 (ch3-I) (Chlamydomonas reinhardtii (Chlamydomonas smithii)).